The primary structure comprises 257 residues: 4-hydroxy-tetrahydrodipicolinate reductase (257 aa).

Residue 7–12 (GCLGRM) participates in NAD(+) binding. An NADP(+)-binding site is contributed by arginine 34. NAD(+) contacts are provided by residues 96–98 (GTT) and 117–120 (SCNM). Histidine 149 (proton donor/acceptor) is an active-site residue. Histidine 150 lines the (S)-2,3,4,5-tetrahydrodipicolinate pocket. The Proton donor role is filled by lysine 153. 159–160 (GT) contributes to the (S)-2,3,4,5-tetrahydrodipicolinate binding site.

The protein belongs to the DapB family.

It localises to the cytoplasm. It catalyses the reaction (S)-2,3,4,5-tetrahydrodipicolinate + NAD(+) + H2O = (2S,4S)-4-hydroxy-2,3,4,5-tetrahydrodipicolinate + NADH + H(+). The catalysed reaction is (S)-2,3,4,5-tetrahydrodipicolinate + NADP(+) + H2O = (2S,4S)-4-hydroxy-2,3,4,5-tetrahydrodipicolinate + NADPH + H(+). It participates in amino-acid biosynthesis; L-lysine biosynthesis via DAP pathway; (S)-tetrahydrodipicolinate from L-aspartate: step 4/4. In terms of biological role, catalyzes the conversion of 4-hydroxy-tetrahydrodipicolinate (HTPA) to tetrahydrodipicolinate. The chain is 4-hydroxy-tetrahydrodipicolinate reductase from Anaplasma marginale (strain St. Maries).